Reading from the N-terminus, the 450-residue chain is Probable transporter MCH1 (450 aa).

Helical transmembrane passes span 32-52, 69-89, 96-116, 127-147, 157-177, 199-219, 255-275, 290-309, 320-340, 355-375, 378-398, and 423-443; these read AFLV…ISLY, VLFS…GLLS, MLSW…AWVF, VLCF…ALFT, LCSI…GSQL, LAVA…IVTM, PAAY…EMFL, VLPE…GLII, MSVQ…VVLA, LSGA…LAVW, AVFG…SILF, and VFWS…LMYL.

Belongs to the major facilitator superfamily.

It is found in the vacuole membrane. Functionally, probable transporter. The chain is Probable transporter MCH1 (MCH1) from Eremothecium gossypii (strain ATCC 10895 / CBS 109.51 / FGSC 9923 / NRRL Y-1056) (Yeast).